Here is a 1374-residue protein sequence, read N- to C-terminus: DNA-directed RNA polymerase subunit beta (1374 aa).

Belongs to the RNA polymerase beta chain family. The RNAP catalytic core consists of 2 alpha, 1 beta, 1 beta' and 1 omega subunit. When a sigma factor is associated with the core the holoenzyme is formed, which can initiate transcription.

The enzyme catalyses RNA(n) + a ribonucleoside 5'-triphosphate = RNA(n+1) + diphosphate. Functionally, DNA-dependent RNA polymerase catalyzes the transcription of DNA into RNA using the four ribonucleoside triphosphates as substrates. The sequence is that of DNA-directed RNA polymerase subunit beta from Rickettsia typhi (strain ATCC VR-144 / Wilmington).